The following is an 84-amino-acid chain: U8-theraphotoxin-Hhn1b (84 aa).

Positions 1–21 (MKVVLIVCLVWVMAMMELVSC) are cleaved as a signal peptide. Cystine bridges form between Cys23-Cys35, Cys29-Cys44, Cys34-Cys67, and Cys54-Cys75.

The protein belongs to the AVIT (prokineticin) family. Expressed by the venom gland.

It is found in the secreted. This is U8-theraphotoxin-Hhn1b from Cyriopagopus hainanus (Chinese bird spider).